Reading from the N-terminus, the 473-residue chain is MIKIYNTLTGHLDEFKPLKENEVSMYVCGPTVYNYIHIGNARPAIFFDTVRRYLEYRGYKVNYVQNFTDVDDKMINKANIENVSIKEIAERYIKAYFEDTSKINLKEEGMIRPKATENINEMIEIIQSLVDKGYAYESNGDVYFEVKKYRDGYGELSKQNIEDLESGARIDVNEIKRDALDFALWKASKPNEPSWDSPWGKGRPGWHIECSAMSRKYLGDSFDIHGGGLDLIFPHHENEMAQSKCGCGGTFAKYWMHNGYININGEKMSKSSGSFVLLRDILKYFEGRVIRLFVLGSHYRKPMEFSDTELNQTKSSLERIENTLKRIKELDRENIKGIDDCQELLATKKEMEAKFIEAMNEDFNTAQALGHIFELVKAVNKTLDEANISKKGLEVIDEVYSYLVMIIQDVLGVQLKLEVEVNNISADLIELILELRRNAREEKNWALSDKIRDRLLELGIKIKDGKDKTTWTM.

Position 28 (cysteine 28) interacts with Zn(2+). The 'HIGH' region motif lies at 30-40 (PTVYNYIHIGN). Zn(2+) is bound by residues cysteine 210, histidine 235, and glutamate 239. The short motif at 267-271 (KMSKS) is the 'KMSKS' region element. Lysine 270 contacts ATP.

This sequence belongs to the class-I aminoacyl-tRNA synthetase family. Monomer. Zn(2+) is required as a cofactor.

It is found in the cytoplasm. It catalyses the reaction tRNA(Cys) + L-cysteine + ATP = L-cysteinyl-tRNA(Cys) + AMP + diphosphate. The protein is Cysteine--tRNA ligase of Fusobacterium nucleatum subsp. nucleatum (strain ATCC 25586 / DSM 15643 / BCRC 10681 / CIP 101130 / JCM 8532 / KCTC 2640 / LMG 13131 / VPI 4355).